We begin with the raw amino-acid sequence, 147 residues long: 3-dehydroquinate dehydratase (147 aa).

The active-site Proton acceptor is Tyr24. 3 residues coordinate substrate: Asn75, His81, and Asp88. His101 acts as the Proton donor in catalysis. Residues 102–103 and Arg112 contribute to the substrate site; that span reads LS.

Belongs to the type-II 3-dehydroquinase family. As to quaternary structure, homododecamer.

It carries out the reaction 3-dehydroquinate = 3-dehydroshikimate + H2O. Its pathway is metabolic intermediate biosynthesis; chorismate biosynthesis; chorismate from D-erythrose 4-phosphate and phosphoenolpyruvate: step 3/7. In terms of biological role, catalyzes a trans-dehydration via an enolate intermediate. This Caulobacter sp. (strain K31) protein is 3-dehydroquinate dehydratase.